A 364-amino-acid polypeptide reads, in one-letter code: Paraneoplastic antigen Ma2 homolog (364 aa).

An N-acetylalanine modification is found at alanine 2. Residues 335–353 are compositionally biased toward acidic residues; that stretch reads EEEEASFENESIEEPEEGD. The interval 335 to 364 is disordered; the sequence is EEEEASFENESIEEPEEGDGYGRWNHEGDD.

This sequence belongs to the PNMA family.

The protein resides in the nucleus. The protein localises to the nucleolus. The protein is Paraneoplastic antigen Ma2 homolog (PNMA2) of Pongo abelii (Sumatran orangutan).